Consider the following 254-residue polypeptide: Small ribosomal subunit protein eS1 (254 aa).

Ala2 carries the post-translational modification N-acetylalanine; partial.

The protein belongs to the eukaryotic ribosomal protein eS1 family. As to quaternary structure, component of the small ribosomal subunit. Mature ribosomes consist of a small (40S) and a large (60S) subunit. The 40S subunit contains about 33 different proteins and 1 molecule of RNA (18S). The 60S subunit contains about 49 different proteins and 3 molecules of RNA (25S, 5.8S and 5S).

The protein localises to the cytoplasm. This is Small ribosomal subunit protein eS1 from Zygosaccharomyces rouxii (strain ATCC 2623 / CBS 732 / NBRC 1130 / NCYC 568 / NRRL Y-229).